The chain runs to 197 residues: Imidazoleglycerol-phosphate dehydratase (197 aa).

The protein belongs to the imidazoleglycerol-phosphate dehydratase family.

It is found in the cytoplasm. It catalyses the reaction D-erythro-1-(imidazol-4-yl)glycerol 3-phosphate = 3-(imidazol-4-yl)-2-oxopropyl phosphate + H2O. It participates in amino-acid biosynthesis; L-histidine biosynthesis; L-histidine from 5-phospho-alpha-D-ribose 1-diphosphate: step 6/9. The sequence is that of Imidazoleglycerol-phosphate dehydratase from Leptospira biflexa serovar Patoc (strain Patoc 1 / Ames).